The chain runs to 226 residues: Probable endolytic peptidoglycan transglycosylase RlpA (226 aa).

The N-terminal stretch at 1–26 (MERFLGFRTPLGALGVVILLTLILSS) is a signal peptide. Residue Cys27 is the site of N-palmitoyl cysteine attachment. A lipid anchor (S-diacylglycerol cysteine) is attached at Cys27.

It belongs to the RlpA family.

Its subcellular location is the cell membrane. Functionally, lytic transglycosylase with a strong preference for naked glycan strands that lack stem peptides. The chain is Probable endolytic peptidoglycan transglycosylase RlpA from Aquifex aeolicus (strain VF5).